A 316-amino-acid polypeptide reads, in one-letter code: Olfactory receptor 10H4 (316 aa).

Over 1 to 26 (MPSQNYSIISEFNLFGFSAFPQHLLP) the chain is Extracellular. A glycan (N-linked (GlcNAc...) asparagine) is linked at Asn5. Residues 27–47 (ILFLLYLLMFLFTLLGNLLIM) form a helical membrane-spanning segment. Topologically, residues 48-55 (ATIWIEHR) are cytoplasmic. A helical membrane pass occupies residues 56-76 (LHTPMYLFLCTLSVSEILFTV). Topologically, residues 77–100 (AITPRMLADLLSTHHSITFVACAN) are extracellular. An intrachain disulfide couples Cys98 to Cys190. The helical transmembrane segment at 101–121 (QMFFSFMFGFTHSFLLLVMGY) threads the bilayer. Residues 122–140 (DRYVAICHPLRYNVLMSPR) lie on the Cytoplasmic side of the membrane. Residues 141 to 161 (DCAHLVACTWAGGSVMGMMVT) form a helical membrane-spanning segment. Residues 162-198 (TIVFHLTFCGSNVIHHFFCHVLSLLKLACENKTSSVI) lie on the Extracellular side of the membrane. A helical membrane pass occupies residues 199 to 219 (MGVMLVCVTALIGCLFLIILS). Residues 220–239 (YVFIVAAILRIPSAEGRHKT) lie on the Cytoplasmic side of the membrane. A helical transmembrane segment spans residues 240-260 (FSTCVSHLTVVVTHYSFASFI). The Extracellular segment spans residues 261 to 273 (YLKPKGLHSMYSD). The helical transmembrane segment at 274 to 294 (ALMATTYTVFTPFLSPIIFSL) threads the bilayer. At 295 to 316 (RNKELKNAINKNFYRKFCPPSS) the chain is on the cytoplasmic side.

It belongs to the G-protein coupled receptor 1 family.

It is found in the cell membrane. Odorant receptor. The polypeptide is Olfactory receptor 10H4 (OR10H4) (Homo sapiens (Human)).